The following is a 378-amino-acid chain: tRNA N(3)-cytidine methyltransferase METTL2B (378 aa).

A2 is subject to N-acetylalanine. S4 is modified (phosphoserine). 2 residues coordinate S-adenosyl-L-methionine: W78 and Y82. Residue T154 is modified to Phosphothreonine. Residues G188, D213, D239, L240, and I260 each contribute to the S-adenosyl-L-methionine site.

This sequence belongs to the methyltransferase superfamily. METL family. Monomer. Interacts with DALRD3.

It is found in the cytoplasm. It carries out the reaction cytidine(32) in tRNA(Thr) + S-adenosyl-L-methionine = N(3)-methylcytidine(32) in tRNA(Thr) + S-adenosyl-L-homocysteine + H(+). It catalyses the reaction cytidine(32) in tRNA(Arg)(CCU) + S-adenosyl-L-methionine = N(3)-methylcytidine(32) in tRNA(Arg)(CCU) + S-adenosyl-L-homocysteine + H(+). In terms of biological role, S-adenosyl-L-methionine-dependent methyltransferase that mediates N(3)-methylcytidine modification of residue 32 of the tRNA anticodon loop of tRNA(Thr)(UGU) and tRNA(Arg)(CCU). The chain is tRNA N(3)-cytidine methyltransferase METTL2B from Homo sapiens (Human).